The primary structure comprises 150 residues: Large ribosomal subunit protein uL13 (150 aa).

It belongs to the universal ribosomal protein uL13 family. Part of the 50S ribosomal subunit.

Functionally, this protein is one of the early assembly proteins of the 50S ribosomal subunit, although it is not seen to bind rRNA by itself. It is important during the early stages of 50S assembly. This is Large ribosomal subunit protein uL13 from Chlamydia caviae (strain ATCC VR-813 / DSM 19441 / 03DC25 / GPIC) (Chlamydophila caviae).